A 207-amino-acid chain; its full sequence is Early nodulin-like protein 11 (207 aa).

Residues 1 to 24 (MVSLISIVSVVFLLFTTFYHFGEA) form the signal peptide. Residues 25-130 (RIINVGGSLD…GEKVTVVVQS (106 aa)) enclose the Phytocyanin domain. N43 is a glycosylation site (N-linked (GlcNAc...) asparagine). A disulfide bond links C83 and C118. Residues 129–179 (QSPNHPKPGPAAVTPTLPPKPSTTPAAPAPAPPTPSPKSSTSTMAPAPAPA) form a disordered region. Residues 144–164 (TLPPKPSTTPAAPAPAPPTPS) show a composition bias toward pro residues. Residues 165-179 (PKSSTSTMAPAPAPA) are compositionally biased toward low complexity. The GPI-anchor amidated serine moiety is linked to residue S181. A propeptide spans 182-207 (SAVGLVAGNGIFWASTLVAVIGLAFA) (removed in mature form).

It belongs to the early nodulin-like (ENODL) family. As to expression, confined to flowers and siliques.

It is found in the cell membrane. Functionally, may act as a carbohydrate transporter. Required, together with ENODL11, ENODL12, ENODL13, ENODL14 and ENODL15, for male-female communication and pollen tube reception and burst at the synergid cell surface of the female gametophyte. This chain is Early nodulin-like protein 11, found in Arabidopsis thaliana (Mouse-ear cress).